The primary structure comprises 487 residues: ATP synthase subunit beta, plastid (487 aa).

169–176 (GGAGVGKT) serves as a coordination point for ATP.

This sequence belongs to the ATPase alpha/beta chains family. F-type ATPases have 2 components, CF(1) - the catalytic core - and CF(0) - the membrane proton channel. CF(1) has five subunits: alpha(3), beta(3), gamma(1), delta(1), epsilon(1). CF(0) has four main subunits: a(1), b(1), b'(1) and c(9-12).

Its subcellular location is the plastid membrane. It carries out the reaction ATP + H2O + 4 H(+)(in) = ADP + phosphate + 5 H(+)(out). Produces ATP from ADP in the presence of a proton gradient across the membrane. The catalytic sites are hosted primarily by the beta subunits. The chain is ATP synthase subunit beta, plastid (atpB) from Cuscuta pentagona (Five-angled dodder).